The primary structure comprises 478 residues: 3-isopropylmalate dehydratase large subunit (478 aa).

Positions 359, 417, and 420 each coordinate [4Fe-4S] cluster.

This sequence belongs to the aconitase/IPM isomerase family. LeuC type 1 subfamily. In terms of assembly, heterodimer of LeuC and LeuD. It depends on [4Fe-4S] cluster as a cofactor.

It catalyses the reaction (2R,3S)-3-isopropylmalate = (2S)-2-isopropylmalate. Its pathway is amino-acid biosynthesis; L-leucine biosynthesis; L-leucine from 3-methyl-2-oxobutanoate: step 2/4. Functionally, catalyzes the isomerization between 2-isopropylmalate and 3-isopropylmalate, via the formation of 2-isopropylmaleate. The chain is 3-isopropylmalate dehydratase large subunit from Anaeromyxobacter sp. (strain Fw109-5).